The sequence spans 459 residues: Biphenyl dioxygenase subunit alpha (459 aa).

In terms of domain architecture, Rieske spans Trp-58–Ala-156. [2Fe-2S] cluster contacts are provided by Cys-100, His-102, Cys-120, and His-123. Residues His-233 and His-239 each coordinate Fe cation.

It belongs to the bacterial ring-hydroxylating dioxygenase alpha subunit family. As to quaternary structure, heterohexamer consisting of three BphA subunits and three BphE subunits. A ferredoxin (BphF) and a ferredoxin reductase (BphG) must be present to obtain activity. Requires [2Fe-2S] cluster as cofactor. The cofactor is Fe cation.

It carries out the reaction biphenyl + NADH + O2 + H(+) = (2R,3S)-3-phenylcyclohexa-3,5-diene-1,2-diol + NAD(+). It participates in xenobiotic degradation; biphenyl degradation; 2-hydroxy-2,4-pentadienoate and benzoate from biphenyl: step 1/4. The chain is Biphenyl dioxygenase subunit alpha (bphA) from Paraburkholderia xenovorans (strain LB400).